Reading from the N-terminus, the 437-residue chain is MKVYIETMGCAMNSRDSEHLLSELSKLDYKETSDPKTADLILINTCSVREKPERKLFSEIGQFAKIKKPNAKIGVCGCTASHMGADILKKAPSVSFVLGARNVSKISQVIHKEKAVEVAIDYDESAYAFEFFEKKAQIRSLLNISIGCDKKCAYCIVPHTRGKEISIPMDLILKEAEKLANNGTKELMLLGQNVNNYGARFSSEHAKVDFSDLLDKLSEISGIERIRFTSPHPLHMNDGFLERFAKNPKVCKSIHMPLQSGSSAVLKMMRRGYSKEWFLNRVERLKALVPEVGISTDIIVGFPNESDKDFEDTMEVLEKVRFDTLYSFIYSPRPFTEAGAWKERVPLEVSSSRLERLQNRHKEILEEKAKLEVGKTHVVLVENRREINNQIVGFEGRSDTGKFIEVACKEKRNPGELVEVEIISHSKGRLMATTKGN.

The region spanning 1-115 (MKVYIETMGC…ISQVIHKEKA (115 aa)) is the MTTase N-terminal domain. Residues cysteine 10, cysteine 46, cysteine 78, cysteine 148, cysteine 152, and cysteine 155 each contribute to the [4Fe-4S] cluster site. One can recognise a Radical SAM core domain in the interval 134–367 (KKAQIRSLLN…QNRHKEILEE (234 aa)). The region spanning 370 to 436 (KLEVGKTHVV…KGRLMATTKG (67 aa)) is the TRAM domain.

Belongs to the methylthiotransferase family. MiaB subfamily. As to quaternary structure, monomer. [4Fe-4S] cluster serves as cofactor.

It localises to the cytoplasm. It catalyses the reaction N(6)-dimethylallyladenosine(37) in tRNA + (sulfur carrier)-SH + AH2 + 2 S-adenosyl-L-methionine = 2-methylsulfanyl-N(6)-dimethylallyladenosine(37) in tRNA + (sulfur carrier)-H + 5'-deoxyadenosine + L-methionine + A + S-adenosyl-L-homocysteine + 2 H(+). In terms of biological role, catalyzes the methylthiolation of N6-(dimethylallyl)adenosine (i(6)A), leading to the formation of 2-methylthio-N6-(dimethylallyl)adenosine (ms(2)i(6)A) at position 37 in tRNAs that read codons beginning with uridine. In Helicobacter pylori (strain G27), this protein is tRNA-2-methylthio-N(6)-dimethylallyladenosine synthase.